The following is a 126-amino-acid chain: Large-conductance mechanosensitive channel (126 aa).

Helical transmembrane passes span 17-37 (VDLA…SSFI) and 70-90 (GLFL…FLII).

Belongs to the MscL family. As to quaternary structure, homopentamer.

The protein resides in the cell inner membrane. In terms of biological role, channel that opens in response to stretch forces in the membrane lipid bilayer. May participate in the regulation of osmotic pressure changes within the cell. This Flavobacterium johnsoniae (strain ATCC 17061 / DSM 2064 / JCM 8514 / BCRC 14874 / CCUG 350202 / NBRC 14942 / NCIMB 11054 / UW101) (Cytophaga johnsonae) protein is Large-conductance mechanosensitive channel.